The following is a 376-amino-acid chain: Putative C-mannosyltransferase DPY19L2P2 (376 aa).

The N-linked (GlcNAc...) asparagine glycan is linked to Asn32. Helical transmembrane passes span 52 to 72 (ACFYVGVIFILNGLMMGLFFI), 107 to 127 (LRESFSYPFLVLQMYVLTLIL), 154 to 174 (AQFILFTQIASLFPMYVVGYI), 182 to 202 (IIYMNMISVTLSFILMFGNSM), 233 to 253 (LNCWLIQGSAWWCGTIILKFL), and 299 to 319 (LLIYTKTLLLPVVMVITCFIF).

The protein belongs to the dpy-19 family. As to expression, fibroblast, lung, lymphoblast, spleen and testis.

Its subcellular location is the membrane. Its function is as follows. Probable C-mannosyltransferase that mediates C-mannosylation of tryptophan residues on target proteins. The polypeptide is Putative C-mannosyltransferase DPY19L2P2 (DPY19L2P2) (Homo sapiens (Human)).